The following is a 996-amino-acid chain: MALQERRAAVTSSDILSAHAISSPALAAAAINFAASFHRDARTCCSAHERSQLQKVYRDKILANDKFTANIAAAFLSVLGPNAGRNDAGAERERWGDFDRLAQRGKNMRDRESQHLQHQSGIIAAWGPRCFEYYGWHVLPLPLLRQVHDLAVLIPSWDDAVELLNSRMLLRHELRVLHGNNKALRIGEHSAASKVQDSRSPVERTDIVAALDWARANATSAAARQAVKEAAQGMNGTPINTFGLKRDCYGMVVPSVGPYDPDGDDDNDEDVVDVSPRPAKHIKLSAAEPLRLMFPGSLSHVQACQRHDTDGEKASTAPIRSNKLSQSKQPELDTAAESLRTRHIHNERINEPLDEVSDCSLSLQTIAVGGGSAQEETPDQDVEHAHPEVEITSAISSELRKVDERTDGIRIGRVIMRRSHCMVREQDNQTNEEGTGEVQSQRDRRARDLGKDMETDMDIDSQLEEMLDIHALEAQRNHEEMSDGEDVVAGVAGPGTPTHRAAEEGGCREKEAENAKTDEEQVQDKAALDQAGNTNTNREVENAAPKAHSQEGALRASRTGTIVERTVELHSTHSIHQRASVNTTAPTVARSSDSDDSDSLHSPTALQNLQAYIDTRTHQLTQVLSQLNSTPDVRHHAQLQLDWLSPQRWASVYVEPEHHMGATSSASSDSADIWCLDWDTFHQYADSNHVFRRPVVIKQKFQDSGMYEVDRYVDMLWQRFPEQHIEVQNSITGTSRLMSMAEYCSTALTVTEAGTSLSDNTTSVSNAVNLRCLARADEPLLTRLERFQLLSTLASRVAGTIGRTEHSPPSNLESLLGFDALSFADAFSSSHANLFGGSWVRCLDGLKIYAIAADLDAEDWRRFADEGYKWSPRGKGRLIALEEDDVLFIPPGLRAIHASFTPEPCLMEGGMLWDECAIPEILDELLWIARHQAGTVQPLEFQLSSLIDALEQWLNENNHINQSSPSHTAAEERQTLKASIQSLRDCLSGRSAAFPS.

Disordered stretches follow at residues 307–333 (HDTDGEKASTAPIRSNKLSQSKQPELD), 425–449 (EQDNQTNEEGTGEVQSQRDRRARDL), 489–556 (AGVA…ALRA), and 571–602 (STHSIHQRASVNTTAPTVARSSDSDDSDSLHS). Polar residues-rich tracts occupy residues 318–329 (PIRSNKLSQSKQ) and 428–439 (NQTNEEGTGEVQ). Basic and acidic residues-rich tracts occupy residues 440 to 449 (SQRDRRARDL) and 500 to 527 (RAAEEGGCREKEAENAKTDEEQVQDKAA). Residues 572–590 (THSIHQRASVNTTAPTVAR) show a composition bias toward polar residues.

It functions in the pathway secondary metabolite biosynthesis. Part of the gene cluster that mediates the biosynthesis of KK-1, a novel cyclic depsipeptide with 10 residues which is a promising active compound with high activity against many plant pathogens, especially Botrytis cinerea. The role of kk1D in KK-1 biosynthesis has still to be determined. The nonribosomal peptide synthetase (NRPS) kk1B catalyzes the elongation and cyclization of the decapeptide chain composed of 1 D-lactic acid residue (D-Lac), 1 pipecolic acid residue (Pip), 1 aspartic acid residue (Asp), 1 isoleucine residue (Ile), 1 glycine residue (Gly), 1 tyrosine residue (Tyr) and 4 valine residues (Val). The Asp, Ile and 3 Val residues are N-methylated by the 5 methyltransferase domains from the NRPS (found in modules 3, 5, 6, 7 and 9), whereas the Tyr residue is O-methylated by the cluster encoded O-methyltransferase kk1A. The thioesterase kk1J is likely to be involved in the corrective mechanism of peptide chain synthesis. The D-lactate dehydrogenase kk1H is involved in the synthesis of D-lactic acid from pyruvic acid, which is recognized by the A domain of the first kk1B module. The pyrroline-5-carboxylate reductase kk1I is involved in the synthesis of the L-pipecolic acid residue of KK-1 from delta-1-pyrroline-5-carboxylate (P5C), a metabolic intermediate of lysine. It is still unclear how kk1C and kk1D are involved in the production of KK-1. The protein is KK-1 biosynthesis cluster protein D of Curvularia clavata.